We begin with the raw amino-acid sequence, 323 residues long: uncharacterized protein (323 aa).

Its subcellular location is the mitochondrion. This is an uncharacterized protein from Schizosaccharomyces pombe (strain 972 / ATCC 24843) (Fission yeast).